Reading from the N-terminus, the 446-residue chain is 4-aminobutyrate aminotransferase (446 aa).

K291 is modified (N6-(pyridoxal phosphate)lysine).

Belongs to the class-III pyridoxal-phosphate-dependent aminotransferase family. Requires pyridoxal 5'-phosphate as cofactor.

It carries out the reaction 4-aminobutanoate + 2-oxoglutarate = succinate semialdehyde + L-glutamate. The catalysed reaction is (S)-3-amino-2-methylpropanoate + 2-oxoglutarate = 2-methyl-3-oxopropanoate + L-glutamate. The protein operates within amino-acid degradation; 4-aminobutanoate degradation. The sequence is that of 4-aminobutyrate aminotransferase (gabT) from Mycobacterium leprae (strain TN).